The sequence spans 89 residues: Class I hydrophobin C (89 aa).

A signal peptide spans 1 to 16; it reads MKFSLATIALAAAVAA. Intrachain disulfides connect cysteine 28–cysteine 68, cysteine 39–cysteine 60, cysteine 40–cysteine 52, and cysteine 69–cysteine 85. Asparagine 36 carries N-linked (GlcNAc...) asparagine glycosylation.

The protein belongs to the fungal hydrophobin family.

It localises to the secreted. The protein resides in the cell wall. The protein localises to the vacuole. Its subcellular location is the cytoplasmic vesicle. Functionally, aerial growth, conidiation, and dispersal of filamentous fungi in the environment rely upon a capability of their secreting small amphipathic proteins called hydrophobins (HPBs) with low sequence identity. Class I can self-assemble into an outermost layer of rodlet bundles on aerial cell surfaces, conferring cellular hydrophobicity that supports fungal growth, development and dispersal; whereas Class II form highly ordered films at water-air interfaces through intermolecular interactions but contribute nothing to the rodlet structure. Hyd1C contributes to certain cell wall-related features, such as hydrophobicity but is not involved in cell wall-related events during fungal proliferation in host hemocoel. Does not contribute to conidial hydrophobicity. The polypeptide is Class I hydrophobin C (Beauveria bassiana (strain ARSEF 2860) (White muscardine disease fungus)).